A 136-amino-acid chain; its full sequence is Nucleoside diphosphate kinase (136 aa).

Residues Lys10, Phe58, Arg86, Thr92, Arg104, and Asn114 each coordinate ATP. The active-site Pros-phosphohistidine intermediate is His117.

It belongs to the NDK family. As to quaternary structure, homotetramer. Mg(2+) is required as a cofactor.

It is found in the cytoplasm. It carries out the reaction a 2'-deoxyribonucleoside 5'-diphosphate + ATP = a 2'-deoxyribonucleoside 5'-triphosphate + ADP. The catalysed reaction is a ribonucleoside 5'-diphosphate + ATP = a ribonucleoside 5'-triphosphate + ADP. In terms of biological role, major role in the synthesis of nucleoside triphosphates other than ATP. The ATP gamma phosphate is transferred to the NDP beta phosphate via a ping-pong mechanism, using a phosphorylated active-site intermediate. In Corynebacterium efficiens (strain DSM 44549 / YS-314 / AJ 12310 / JCM 11189 / NBRC 100395), this protein is Nucleoside diphosphate kinase.